Reading from the N-terminus, the 543-residue chain is T-complex protein 1 subunit eta (543 aa).

Position 1 is an N-acetylmethionine (methionine 1). An ADP-binding site is contributed by glycine 41. Glycine 41 contributes to the ATP binding site. Lysine 67 carries the post-translational modification N6-acetyllysine. Aspartate 92 serves as a coordination point for Mg(2+). ADP contacts are provided by glycine 93, threonine 94, threonine 95, serine 96, serine 164, and serine 165. Glycine 93 is a binding site for ATP. Serine 96 contacts ATP. Residues lysine 250 and lysine 320 each carry the N6-acetyllysine modification. Residues arginine 398 and glycine 409 each contribute to the ATP site. An ADP-binding site is contributed by glycine 409. A Glycyl lysine isopeptide (Lys-Gly) (interchain with G-Cter in SUMO2) cross-link involves residue lysine 430. The ADP site is built by glutamate 494 and arginine 499. Arginine 499 contacts ATP. Residue arginine 535 is modified to Omega-N-methylarginine.

It belongs to the TCP-1 chaperonin family. As to quaternary structure, component of the chaperonin-containing T-complex (TRiC), a hexadecamer composed of two identical back-to-back stacked rings enclosing a protein folding chamber. Each ring is made up of eight different subunits: TCP1/CCT1, CCT2, CCT3, CCT4, CCT5, CCT6A/CCT6, CCT7, CCT8. Interacts with PACRG. Interacts with DLEC1.

It is found in the cytoplasm. The enzyme catalyses ATP + H2O = ADP + phosphate + H(+). Component of the chaperonin-containing T-complex (TRiC), a molecular chaperone complex that assists the folding of actin, tubulin and other proteins upon ATP hydrolysis. The TRiC complex mediates the folding of WRAP53/TCAB1, thereby regulating telomere maintenance. This is T-complex protein 1 subunit eta (CCT7) from Pongo abelii (Sumatran orangutan).